We begin with the raw amino-acid sequence, 288 residues long: NAD kinase (288 aa).

D73 functions as the Proton acceptor in the catalytic mechanism. Residues 73–74 (DG), R78, 144–145 (NE), D174, 185–190 (TAYSLS), and A209 each bind NAD(+).

The protein belongs to the NAD kinase family. It depends on a divalent metal cation as a cofactor.

Its subcellular location is the cytoplasm. It carries out the reaction NAD(+) + ATP = ADP + NADP(+) + H(+). Involved in the regulation of the intracellular balance of NAD and NADP, and is a key enzyme in the biosynthesis of NADP. Catalyzes specifically the phosphorylation on 2'-hydroxyl of the adenosine moiety of NAD to yield NADP. The sequence is that of NAD kinase from Porphyromonas gingivalis (strain ATCC 33277 / DSM 20709 / CIP 103683 / JCM 12257 / NCTC 11834 / 2561).